Here is a 480-residue protein sequence, read N- to C-terminus: Glycogen synthase (480 aa).

Residue Lys15 coordinates ADP-alpha-D-glucose.

It belongs to the glycosyltransferase 1 family. Bacterial/plant glycogen synthase subfamily.

The catalysed reaction is [(1-&gt;4)-alpha-D-glucosyl](n) + ADP-alpha-D-glucose = [(1-&gt;4)-alpha-D-glucosyl](n+1) + ADP + H(+). It participates in glycan biosynthesis; glycogen biosynthesis. Its function is as follows. Synthesizes alpha-1,4-glucan chains using ADP-glucose. The protein is Glycogen synthase of Clostridioides difficile (strain 630) (Peptoclostridium difficile).